An 804-amino-acid polypeptide reads, in one-letter code: Phenylalanine--tRNA ligase beta subunit (804 aa).

The tRNA-binding domain occupies 40–155 (GEGIKGVVIG…NDAETGSDAL (116 aa)). The 76-residue stretch at 409-484 (IEANNIHVSA…RLYGYDNIPS (76 aa)) folds into the B5 domain. Residues Asp462, Asp468, Glu471, and Glu472 each coordinate Mg(2+). One can recognise an FDX-ACB domain in the interval 710 to 803 (PKYPSVTRDI…LEDTYQAVLR (94 aa)).

It belongs to the phenylalanyl-tRNA synthetase beta subunit family. Type 1 subfamily. Tetramer of two alpha and two beta subunits. Mg(2+) is required as a cofactor.

Its subcellular location is the cytoplasm. It carries out the reaction tRNA(Phe) + L-phenylalanine + ATP = L-phenylalanyl-tRNA(Phe) + AMP + diphosphate + H(+). This is Phenylalanine--tRNA ligase beta subunit (pheT) from Bacillus subtilis (strain 168).